The following is a 937-amino-acid chain: Isoleucine--tRNA ligase (937 aa).

The 'HIGH' region motif lies at 58 to 68; the sequence is PYANGNIHIGH. Position 560 (Glu-560) interacts with L-isoleucyl-5'-AMP. The 'KMSKS' region motif lies at 601–605; that stretch reads KMSKS. Lys-604 provides a ligand contact to ATP. Residues Cys-900, Cys-903, Cys-920, and Cys-923 each contribute to the Zn(2+) site.

Belongs to the class-I aminoacyl-tRNA synthetase family. IleS type 1 subfamily. In terms of assembly, monomer. It depends on Zn(2+) as a cofactor.

Its subcellular location is the cytoplasm. It carries out the reaction tRNA(Ile) + L-isoleucine + ATP = L-isoleucyl-tRNA(Ile) + AMP + diphosphate. In terms of biological role, catalyzes the attachment of isoleucine to tRNA(Ile). As IleRS can inadvertently accommodate and process structurally similar amino acids such as valine, to avoid such errors it has two additional distinct tRNA(Ile)-dependent editing activities. One activity is designated as 'pretransfer' editing and involves the hydrolysis of activated Val-AMP. The other activity is designated 'posttransfer' editing and involves deacylation of mischarged Val-tRNA(Ile). In Thioalkalivibrio sulfidiphilus (strain HL-EbGR7), this protein is Isoleucine--tRNA ligase.